Reading from the N-terminus, the 474-residue chain is Selection and upkeep of intraepithelial T-cells protein 4 (474 aa).

The first 25 residues, 1 to 25 (MGATEVLTSYCVVLCLLQMVALSSG), serve as a signal peptide directing secretion. At 26–241 (HFTVIGSQRP…VLSGELFSWK (216 aa)) the chain is on the extracellular side. Residues 27-140 (FTVIGSQRPI…EEHITEVKVT (114 aa)) enclose the Ig-like V-type domain. Intrachain disulfides connect Cys-48/Cys-122 and Cys-162/Cys-216. N-linked (GlcNAc...) asparagine glycans are attached at residues Asn-111 and Asn-199. The Ig-like C1-type domain maps to 141–234 (ATSSDIQILM…QEQSINIVLS (94 aa)). The helical transmembrane segment at 242–262 (IVWIMILSTISFVMIDFCMTY) threads the bilayer. Over 263 to 298 (CVQQQLIHEESLSTVDNDQCESDQSEGTCYKRNYPW) the chain is Cytoplasmic. Residues 299-319 (IIIAVVPIISVFAIIGVMLFL) form a helical membrane-spanning segment. Residues 320–341 (HLEQRVTILEQHFELDTLWLED) lie on the Extracellular side of the membrane. Residues 342–362 (ISVILCVVIVSNINLIPLIYF) form a helical membrane-spanning segment. Residues 363-381 (RLHEHVPRFKDRSPILNKA) are Cytoplasmic-facing. A helical transmembrane segment spans residues 382–402 (VVFLHFIYFSIVCGTILLVHL). Residues 403-420 (QLRNKVSISDSLFSLYNS) are Extracellular-facing. A helical transmembrane segment spans residues 421–441 (WLTDISMILGFLLSIFIVTTI). Residues 442–474 (AKSSLFNKKWCIGLCIHMKEAEATGGPCEGEEL) are Cytoplasmic-facing.

It belongs to the SKINT family. Expressed in skin, thymus and, to a lower extent, bladder and testis.

It localises to the membrane. Its function is as follows. May act by engaging a cell surface molecule on immature T-cells in the embryonic thymus. The sequence is that of Selection and upkeep of intraepithelial T-cells protein 4 (Skint4) from Mus musculus (Mouse).